A 207-amino-acid polypeptide reads, in one-letter code: Ribosomal RNA small subunit methyltransferase G (207 aa).

S-adenosyl-L-methionine-binding positions include Gly-74, Leu-79, 125 to 126, and Arg-140; that span reads VE.

This sequence belongs to the methyltransferase superfamily. RNA methyltransferase RsmG family.

It is found in the cytoplasm. It catalyses the reaction guanosine(527) in 16S rRNA + S-adenosyl-L-methionine = N(7)-methylguanosine(527) in 16S rRNA + S-adenosyl-L-homocysteine. Its function is as follows. Specifically methylates the N7 position of guanine in position 527 of 16S rRNA. This Shewanella halifaxensis (strain HAW-EB4) protein is Ribosomal RNA small subunit methyltransferase G.